The chain runs to 154 residues: Myoglobin (154 aa).

A Globin domain is found at glycine 2–lysine 148. Phosphoserine is present on serine 4. Nitrite is bound at residue histidine 65. Histidine 65 is a binding site for O2. Threonine 68 carries the phosphothreonine modification. Position 94 (histidine 94) interacts with heme b.

The protein belongs to the globin family. In terms of assembly, monomeric.

It localises to the cytoplasm. It is found in the sarcoplasm. The enzyme catalyses Fe(III)-heme b-[protein] + nitric oxide + H2O = Fe(II)-heme b-[protein] + nitrite + 2 H(+). The catalysed reaction is H2O2 + AH2 = A + 2 H2O. Monomeric heme protein which primary function is to store oxygen and facilitate its diffusion within muscle tissues. Reversibly binds oxygen through a pentacoordinated heme iron and enables its timely and efficient release as needed during periods of heightened demand. Depending on the oxidative conditions of tissues and cells, and in addition to its ability to bind oxygen, it also has a nitrite reductase activity whereby it regulates the production of bioactive nitric oxide. Under stress conditions, like hypoxia and anoxia, it also protects cells against reactive oxygen species thanks to its pseudoperoxidase activity. The chain is Myoglobin (MB) from Lepilemur mustelinus (Weasel sportive lemur).